Here is a 327-residue protein sequence, read N- to C-terminus: tRNA dimethylallyltransferase (327 aa).

14–21 contributes to the ATP binding site; it reads GPTASGKT. Position 16-21 (16-21) interacts with substrate; it reads TASGKT. Interaction with substrate tRNA regions lie at residues 39-42 and 163-167; these read DSAL and QRIQR.

It belongs to the IPP transferase family. As to quaternary structure, monomer. The cofactor is Mg(2+).

It catalyses the reaction adenosine(37) in tRNA + dimethylallyl diphosphate = N(6)-dimethylallyladenosine(37) in tRNA + diphosphate. Its function is as follows. Catalyzes the transfer of a dimethylallyl group onto the adenine at position 37 in tRNAs that read codons beginning with uridine, leading to the formation of N6-(dimethylallyl)adenosine (i(6)A). In Xanthomonas euvesicatoria pv. vesicatoria (strain 85-10) (Xanthomonas campestris pv. vesicatoria), this protein is tRNA dimethylallyltransferase.